The primary structure comprises 388 residues: L-lactate dehydrogenase (388 aa).

Residues 1–380 (MIISAASDYR…SADALSRVTR (380 aa)) enclose the FMN hydroxy acid dehydrogenase domain. Tyr-24 provides a ligand contact to substrate. The FMN site is built by Ser-106 and Gln-127. Tyr-129 is a substrate binding site. Position 155 (Thr-155) interacts with FMN. Arg-164 lines the substrate pocket. Lys-251 contacts FMN. His-275 acts as the Proton acceptor in catalysis. Arg-278 provides a ligand contact to substrate. FMN is bound at residue 306–330 (DSGIRSGLDVVRMLALGADAVLLGR).

The protein belongs to the FMN-dependent alpha-hydroxy acid dehydrogenase family. Requires FMN as cofactor.

It is found in the cell inner membrane. The enzyme catalyses (S)-lactate + A = pyruvate + AH2. Its function is as follows. Catalyzes the conversion of L-lactate to pyruvate. Is coupled to the respiratory chain. This Xanthomonas oryzae pv. oryzae (strain MAFF 311018) protein is L-lactate dehydrogenase.